The sequence spans 308 residues: Ribosomal RNA small subunit methyltransferase H (308 aa).

S-adenosyl-L-methionine contacts are provided by residues 36 to 38, Asp55, Phe86, Asp103, and Gln110; that span reads GGH.

The protein belongs to the methyltransferase superfamily. RsmH family.

The protein localises to the cytoplasm. It carries out the reaction cytidine(1402) in 16S rRNA + S-adenosyl-L-methionine = N(4)-methylcytidine(1402) in 16S rRNA + S-adenosyl-L-homocysteine + H(+). Its function is as follows. Specifically methylates the N4 position of cytidine in position 1402 (C1402) of 16S rRNA. This chain is Ribosomal RNA small subunit methyltransferase H, found in Helicobacter pylori (strain HPAG1).